The chain runs to 883 residues: Valine--tRNA ligase (883 aa).

The 'HIGH' region signature appears at 46-56 (PNVTGKLHLGH). A 'KMSKS' region motif is present at residues 520–524 (KMSKS). Lys-523 lines the ATP pocket. A coiled-coil region spans residues 809–883 (LADLLNVEEE…RIDEMKKLVK (75 aa)).

This sequence belongs to the class-I aminoacyl-tRNA synthetase family. ValS type 1 subfamily. Monomer.

The protein localises to the cytoplasm. It catalyses the reaction tRNA(Val) + L-valine + ATP = L-valyl-tRNA(Val) + AMP + diphosphate. Functionally, catalyzes the attachment of valine to tRNA(Val). As ValRS can inadvertently accommodate and process structurally similar amino acids such as threonine, to avoid such errors, it has a 'posttransfer' editing activity that hydrolyzes mischarged Thr-tRNA(Val) in a tRNA-dependent manner. The chain is Valine--tRNA ligase from Streptococcus pneumoniae serotype 4 (strain ATCC BAA-334 / TIGR4).